The sequence spans 439 residues: Eukaryotic translation initiation factor 2 subunit gamma (439 aa).

The tr-type G domain maps to 11–215 (QATLNIGTIG…FIVNYIPEPV (205 aa)). The interval 20–27 (GHVAHGKS) is G1. 23–28 (AHGKST) serves as a coordination point for GTP. Positions 48–52 (NITIK) are G2. Residues 103–106 (DCPG) form a G3 region. GTP-binding positions include 159 to 162 (NKID) and 193 to 195 (AAQ). Positions 159-162 (NKID) are G4. The tract at residues 193-195 (AAQ) is G5. Residues 415–427 (GEIKDGTCIEPEY) form an interacts with CDC123 region.

It belongs to the TRAFAC class translation factor GTPase superfamily. Classic translation factor GTPase family. EIF2G subfamily. As to quaternary structure, eukaryotic translation initiation factor 2 eIF2 is a heterotrimeric complex composed of an alpha, a beta and a gamma subunit. The factors eIF-1, eIF-2, eIF-3, TIF5/eIF-5 and methionyl-tRNAi form a multifactor complex (MFC) that may bind to the 40S ribosome.

The protein resides in the cytoplasm. It is found in the cytosol. It carries out the reaction GTP + H2O = GDP + phosphate + H(+). In terms of biological role, as a subunit of eukaryotic initiation factor 2 eIF2, involved in the early steps of protein synthesis. In the presence of GTP, eIF-2 forms a ternary complex with initiator tRNA Met-tRNAi and then recruits the 40S ribosomal complex and initiation factors eIF-1, eIF-1A and eIF-3 to form the 43S pre-initiation complex (43S PIC), a step that determines the rate of protein translation. The 43S PIC binds to mRNA and scans downstream to the initiation codon, where it forms a 48S initiation complex by codon-anticodon base pairing. This leads to the displacement of eIF-1 to allow GTPase-activating protein (GAP) eIF-5-mediated hydrolysis of eIF2-bound GTP. Hydrolysis of GTP and release of Pi, which makes GTP hydrolysis irreversible, causes the release of the eIF-2-GDP binary complex from the 40S subunit, an event that is essential for the subsequent joining of the 60S ribosomal subunit to form an elongation-competent 80S ribosome. In order for eIF-2 to recycle and catalyze another round of initiation, the GDP bound to eIF-2 must be exchanged with GTP by way of a reaction catalyzed by GDP-GTP exchange factor (GEF) eIF-2B. This chain is Eukaryotic translation initiation factor 2 subunit gamma, found in Encephalitozoon cuniculi (strain GB-M1) (Microsporidian parasite).